The chain runs to 261 residues: Cytochrome c oxidase subunit 3 (261 aa).

The Mitochondrial matrix segment spans residues 1–15; sequence MTHQTHAYHMVNPSP. Residues 16 to 34 form a helical membrane-spanning segment; the sequence is WPLTGALSALLMTSGLIMW. Residues 35–40 lie on the Mitochondrial intermembrane side of the membrane; sequence FHFNSM. A helical transmembrane segment spans residues 41 to 66; sequence TLLMLGLTTNMLTMYQWWRDIIREST. The Mitochondrial matrix segment spans residues 67-72; it reads FQGHHT. A helical transmembrane segment spans residues 73-105; sequence SAVQKGLRYGMILFIISEVLFFTGFFWAFYHSS. Residues 106–128 are Mitochondrial intermembrane-facing; that stretch reads LAPTPELGGCWPPTGIHPLNPLE. A helical membrane pass occupies residues 129–152; it reads VPLLNTSVLLASGVSITWAHHSLM. Residues 153 to 155 lie on the Mitochondrial matrix side of the membrane; it reads EGN. Residues 156–183 traverse the membrane as a helical segment; that stretch reads RNHMLQALFITIALGVYFTLLQASEYYE. Residues 184–190 are Mitochondrial intermembrane-facing; the sequence is APFTISD. Residues 191–223 traverse the membrane as a helical segment; it reads GVYGSTFFVATGFHGLHVIIGSTFLIVCFFRQL. The Mitochondrial matrix segment spans residues 224–232; that stretch reads KFHFTSTHH. Residues 233 to 256 traverse the membrane as a helical segment; that stretch reads FGFEAAAWYWHFVDVVWLFLYVSI. Residues 257 to 261 are Mitochondrial intermembrane-facing; the sequence is YWWGS.

Belongs to the cytochrome c oxidase subunit 3 family. In terms of assembly, component of the cytochrome c oxidase (complex IV, CIV), a multisubunit enzyme composed of 14 subunits. The complex is composed of a catalytic core of 3 subunits MT-CO1, MT-CO2 and MT-CO3, encoded in the mitochondrial DNA, and 11 supernumerary subunits COX4I, COX5A, COX5B, COX6A, COX6B, COX6C, COX7A, COX7B, COX7C, COX8 and NDUFA4, which are encoded in the nuclear genome. The complex exists as a monomer or a dimer and forms supercomplexes (SCs) in the inner mitochondrial membrane with NADH-ubiquinone oxidoreductase (complex I, CI) and ubiquinol-cytochrome c oxidoreductase (cytochrome b-c1 complex, complex III, CIII), resulting in different assemblies (supercomplex SCI(1)III(2)IV(1) and megacomplex MCI(2)III(2)IV(2)).

The protein resides in the mitochondrion inner membrane. The enzyme catalyses 4 Fe(II)-[cytochrome c] + O2 + 8 H(+)(in) = 4 Fe(III)-[cytochrome c] + 2 H2O + 4 H(+)(out). Functionally, component of the cytochrome c oxidase, the last enzyme in the mitochondrial electron transport chain which drives oxidative phosphorylation. The respiratory chain contains 3 multisubunit complexes succinate dehydrogenase (complex II, CII), ubiquinol-cytochrome c oxidoreductase (cytochrome b-c1 complex, complex III, CIII) and cytochrome c oxidase (complex IV, CIV), that cooperate to transfer electrons derived from NADH and succinate to molecular oxygen, creating an electrochemical gradient over the inner membrane that drives transmembrane transport and the ATP synthase. Cytochrome c oxidase is the component of the respiratory chain that catalyzes the reduction of oxygen to water. Electrons originating from reduced cytochrome c in the intermembrane space (IMS) are transferred via the dinuclear copper A center (CU(A)) of subunit 2 and heme A of subunit 1 to the active site in subunit 1, a binuclear center (BNC) formed by heme A3 and copper B (CU(B)). The BNC reduces molecular oxygen to 2 water molecules using 4 electrons from cytochrome c in the IMS and 4 protons from the mitochondrial matrix. The polypeptide is Cytochrome c oxidase subunit 3 (MT-CO3) (Damaliscus lunatus (Tsessebe)).